A 304-amino-acid polypeptide reads, in one-letter code: Mas-related G-protein coupled receptor member A1 (304 aa).

The Extracellular portion of the chain corresponds to 1-17 (MDNTIPGGINITILIPN). Asn10 carries N-linked (GlcNAc...) asparagine glycosylation. A helical transmembrane segment spans residues 18–38 (LMIIIFGLVGLTGNGIVFWLL). Residues 39-53 (GFCLHRNAFSVYILN) are Cytoplasmic-facing. The helical transmembrane segment at 54–74 (LALADFFFLLGHIIDSILLLL) threads the bilayer. A topological domain (extracellular) is located at residue Asn75. Residues 76 to 96 (VFYPITFLLCFYTIMMVLYIA) form a helical membrane-spanning segment. Residues 97-131 (GLSMLSAISTERCLSVLCPIWYHCHRPEHTSTVMC) are Cytoplasmic-facing. The helical transmembrane segment at 132 to 152 (AVIWVLSLLICILNSYFCGFL) threads the bilayer. Topologically, residues 153–166 (NTQYKNENGCLALN) are extracellular. A helical membrane pass occupies residues 167 to 187 (FFTAAYLMFLFVVLCLSSLAL). Topologically, residues 188 to 206 (VARLFCGTGQIKLTRLYVT) are cytoplasmic. Residues 207–227 (IILSILVFLLCGLPFGIHWFL) traverse the membrane as a helical segment. Residues 228–243 (LFKIKDDFHVFDLGFY) are Extracellular-facing. A helical transmembrane segment spans residues 244–264 (LASVVLTAINSCANPIIYFFV). Over 265–304 (GSFRHRLKHQTLKMVLQNALQDTPETAKIMVEMSRSKSEP) the chain is Cytoplasmic.

The protein belongs to the G-protein coupled receptor 1 family. Mas subfamily. In terms of tissue distribution, expressed in a subset of sensory neurons that includes nociceptors. Expressed in the subclass of non-peptidergic sensory neurons that are IB4(+) and VR1(-).

It is found in the cell membrane. In terms of biological role, orphan receptor activated by a subset of RFamide-family neuropeptides such as FLRF-amide and FMRF-amide. Mediates its action by association with G proteins that activate a phosphatidylinositol-calcium second messenger system. Its effect is mediated by G(q) and G(11) proteins. May regulate the function of nociceptive neurons by modulation of pain perception. The polypeptide is Mas-related G-protein coupled receptor member A1 (Mrgpra1) (Mus musculus (Mouse)).